The sequence spans 430 residues: Adenylosuccinate synthetase (430 aa).

GTP contacts are provided by residues 12–18 (GDEGKGK) and 40–42 (GHT). Asp-13 functions as the Proton acceptor in the catalytic mechanism. Positions 13 and 40 each coordinate Mg(2+). Residues 13 to 16 (DEGK), 38 to 41 (NAGH), Thr-130, Arg-144, Gln-224, Thr-239, and Arg-303 contribute to the IMP site. The Proton donor role is filled by His-41. 299–305 (TVTGRKR) is a substrate binding site. GTP is bound by residues Arg-305, 331–333 (KLD), and 413–415 (STS).

Belongs to the adenylosuccinate synthetase family. As to quaternary structure, homodimer. Mg(2+) serves as cofactor.

It is found in the cytoplasm. The catalysed reaction is IMP + L-aspartate + GTP = N(6)-(1,2-dicarboxyethyl)-AMP + GDP + phosphate + 2 H(+). It participates in purine metabolism; AMP biosynthesis via de novo pathway; AMP from IMP: step 1/2. Functionally, plays an important role in the de novo pathway of purine nucleotide biosynthesis. Catalyzes the first committed step in the biosynthesis of AMP from IMP. This Cereibacter sphaeroides (strain KD131 / KCTC 12085) (Rhodobacter sphaeroides) protein is Adenylosuccinate synthetase.